Reading from the N-terminus, the 1021-residue chain is Ubiquitin-activating enzyme E1 1 (1021 aa).

3 residues coordinate ATP: arginine 22, alanine 442, and aspartate 468. Aspartate 470 contacts Mg(2+). Residues arginine 479, lysine 492, valine 518, and 542-543 (DN) each bind ATP. Residue aspartate 542 coordinates Mg(2+). Cysteine 598 serves as the catalytic Glycyl thioester intermediate.

This sequence belongs to the ubiquitin-activating E1 family. In terms of assembly, monomer.

It is found in the cytoplasm. The protein localises to the nucleus. The enzyme catalyses ATP + ubiquitin + [E1 ubiquitin-activating enzyme]-L-cysteine = AMP + diphosphate + S-ubiquitinyl-[E1 ubiquitin-activating enzyme]-L-cysteine.. It functions in the pathway protein modification; protein ubiquitination. In terms of biological role, E1 ubiquitin-activating enzyme that catalyzes the first step in ubiquitin conjugation to mark cellular proteins for degradation through the ubiquitin-proteasome system. Activates ubiquitin by first adenylating its C-terminal glycine residue with ATP, and thereafter linking this residue to the side chain of a cysteine residue in E1, yielding a ubiquitin-E1 thioester and free AMP. This Candida albicans (strain WO-1) (Yeast) protein is Ubiquitin-activating enzyme E1 1 (UBA1).